A 293-amino-acid polypeptide reads, in one-letter code: 33 kDa chaperonin (293 aa).

Disulfide bonds link C236–C238 and C269–C272.

This sequence belongs to the HSP33 family. Under oxidizing conditions two disulfide bonds are formed involving the reactive cysteines. Under reducing conditions zinc is bound to the reactive cysteines and the protein is inactive.

It localises to the cytoplasm. Functionally, redox regulated molecular chaperone. Protects both thermally unfolding and oxidatively damaged proteins from irreversible aggregation. Plays an important role in the bacterial defense system toward oxidative stress. In Lactobacillus delbrueckii subsp. bulgaricus (strain ATCC 11842 / DSM 20081 / BCRC 10696 / JCM 1002 / NBRC 13953 / NCIMB 11778 / NCTC 12712 / WDCM 00102 / Lb 14), this protein is 33 kDa chaperonin.